Here is a 39-residue protein sequence, read N- to C-terminus: Photosystem II reaction center protein X (39 aa).

Residues Trp10–Ile30 traverse the membrane as a helical segment.

This sequence belongs to the PsbX family. Type 1 subfamily. PSII is composed of 1 copy each of membrane proteins PsbA, PsbB, PsbC, PsbD, PsbE, PsbF, PsbH, PsbI, PsbJ, PsbK, PsbL, PsbM, PsbT, PsbX, PsbY, PsbZ, Psb30/Ycf12, peripheral proteins PsbO, CyanoQ (PsbQ), PsbU, PsbV and a large number of cofactors. It forms dimeric complexes.

The protein localises to the cellular thylakoid membrane. In terms of biological role, involved in the binding and/or turnover of quinones at the Q(B) site of photosystem II (PSII). PSII is a light-driven water plastoquinone oxidoreductase, using light energy to abstract electrons from H(2)O, generating a proton gradient subsequently used for ATP formation. The sequence is that of Photosystem II reaction center protein X from Nostoc punctiforme (strain ATCC 29133 / PCC 73102).